We begin with the raw amino-acid sequence, 232 residues long: 5'-methylthioadenosine/S-adenosylhomocysteine nucleosidase (232 aa).

Catalysis depends on Glu12, which acts as the Proton acceptor. Residues Gly78, Ile152, and 173–174 (ME) each bind substrate. Catalysis depends on Asp197, which acts as the Proton donor.

This sequence belongs to the PNP/UDP phosphorylase family. MtnN subfamily. In terms of assembly, homodimer.

It catalyses the reaction S-adenosyl-L-homocysteine + H2O = S-(5-deoxy-D-ribos-5-yl)-L-homocysteine + adenine. The catalysed reaction is S-methyl-5'-thioadenosine + H2O = 5-(methylsulfanyl)-D-ribose + adenine. It carries out the reaction 5'-deoxyadenosine + H2O = 5-deoxy-D-ribose + adenine. Its pathway is amino-acid biosynthesis; L-methionine biosynthesis via salvage pathway; S-methyl-5-thio-alpha-D-ribose 1-phosphate from S-methyl-5'-thioadenosine (hydrolase route): step 1/2. In terms of biological role, catalyzes the irreversible cleavage of the glycosidic bond in both 5'-methylthioadenosine (MTA) and S-adenosylhomocysteine (SAH/AdoHcy) to adenine and the corresponding thioribose, 5'-methylthioribose and S-ribosylhomocysteine, respectively. Also cleaves 5'-deoxyadenosine, a toxic by-product of radical S-adenosylmethionine (SAM) enzymes, into 5-deoxyribose and adenine. Thus, is required for in vivo function of the radical SAM enzymes biotin synthase and lipoic acid synthase, that are inhibited by 5'-deoxyadenosine accumulation. This chain is 5'-methylthioadenosine/S-adenosylhomocysteine nucleosidase, found in Escherichia fergusonii (strain ATCC 35469 / DSM 13698 / CCUG 18766 / IAM 14443 / JCM 21226 / LMG 7866 / NBRC 102419 / NCTC 12128 / CDC 0568-73).